We begin with the raw amino-acid sequence, 92 residues long: Putative transition state regulator Abh (92 aa).

Residues 5-50 (GVVRKVDELGRIVMPIELRRALDIAIKDSIEFFVDGDKIILKKYKP) enclose the SpoVT-AbrB domain.

It to B.subtilis AbrB and SpoVT.

In Bacillus subtilis (strain 168), this protein is Putative transition state regulator Abh (abh).